We begin with the raw amino-acid sequence, 210 residues long: Thymidylate kinase (210 aa).

Residue 10–17 (GLEGAGKS) participates in ATP binding.

Belongs to the thymidylate kinase family.

It carries out the reaction dTMP + ATP = dTDP + ADP. Phosphorylation of dTMP to form dTDP in both de novo and salvage pathways of dTTP synthesis. The polypeptide is Thymidylate kinase (Haemophilus influenzae (strain PittEE)).